The following is a 345-amino-acid chain: NADH-quinone oxidoreductase subunit H (345 aa).

8 helical membrane passes run 13-33 (VLIL…LLFL), 84-104 (FMLA…VIPF), 115-135 (VAIL…IMGG), 161-181 (LGLI…GGIV), 190-210 (FFSW…ISCL), 248-268 (YIAI…GWLS), 277-297 (VFWM…VKAI), and 309-329 (LGWK…AFAA).

The protein belongs to the complex I subunit 1 family. As to quaternary structure, NDH-1 is composed of 14 different subunits. Subunits NuoA, H, J, K, L, M, N constitute the membrane sector of the complex.

Its subcellular location is the cell inner membrane. The enzyme catalyses a quinone + NADH + 5 H(+)(in) = a quinol + NAD(+) + 4 H(+)(out). In terms of biological role, NDH-1 shuttles electrons from NADH, via FMN and iron-sulfur (Fe-S) centers, to quinones in the respiratory chain. The immediate electron acceptor for the enzyme in this species is believed to be ubiquinone. Couples the redox reaction to proton translocation (for every two electrons transferred, four hydrogen ions are translocated across the cytoplasmic membrane), and thus conserves the redox energy in a proton gradient. This subunit may bind ubiquinone. The chain is NADH-quinone oxidoreductase subunit H from Roseobacter denitrificans (strain ATCC 33942 / OCh 114) (Erythrobacter sp. (strain OCh 114)).